A 306-amino-acid chain; its full sequence is uncharacterized protein (306 aa).

The Proton donor role is filled by Tyr51. 197–207 provides a ligand contact to NADP(+); the sequence is GPVAKGLLTEK.

Belongs to the aldo/keto reductase family. Aldo/keto reductase 2 subfamily.

This is an uncharacterized protein from Bacillus subtilis (strain 168).